Here is a 254-residue protein sequence, read N- to C-terminus: MVKVILNGCSGKMGSVISNLAETKFPNVEIVAGIDNNTKAQRPYPIFAKPEDCNVSYDVLLDFSRADALKSLVEFSKKTKKPLILCSTGYTAEDLKFIEESSKEIPLFRSANMSIGINLVNNLLKKVAPVLYENFDIELVERHHNQKVDAPSGTALLLAHTIQDSLKEETKLLYGREGIAKREKNEICVNTVRGGGIIGDHEVIFAGDGEVIEINHKAISRDVFAIGALKACEYMADKTKAGKYSMDDVLQLNF.

Residues 8–13, D35, 86–88, and 110–113 each bind NAD(+); these read GCSGKM, CST, and SANM. The active-site Proton donor/acceptor is H143. H144 is a binding site for (S)-2,3,4,5-tetrahydrodipicolinate. K147 serves as the catalytic Proton donor. 153 to 154 lines the (S)-2,3,4,5-tetrahydrodipicolinate pocket; that stretch reads GT.

This sequence belongs to the DapB family.

The protein resides in the cytoplasm. It carries out the reaction (S)-2,3,4,5-tetrahydrodipicolinate + NAD(+) + H2O = (2S,4S)-4-hydroxy-2,3,4,5-tetrahydrodipicolinate + NADH + H(+). It catalyses the reaction (S)-2,3,4,5-tetrahydrodipicolinate + NADP(+) + H2O = (2S,4S)-4-hydroxy-2,3,4,5-tetrahydrodipicolinate + NADPH + H(+). It functions in the pathway amino-acid biosynthesis; L-lysine biosynthesis via DAP pathway; (S)-tetrahydrodipicolinate from L-aspartate: step 4/4. Functionally, catalyzes the conversion of 4-hydroxy-tetrahydrodipicolinate (HTPA) to tetrahydrodipicolinate. The protein is 4-hydroxy-tetrahydrodipicolinate reductase of Clostridium perfringens (strain ATCC 13124 / DSM 756 / JCM 1290 / NCIMB 6125 / NCTC 8237 / Type A).